The sequence spans 1026 residues: Translation initiation factor IF-2, chloroplastic (1026 aa).

A chloroplast-targeting transit peptide spans 1–63 (MPSMLVLVGT…KKWLCRYSVS (63 aa)). Residues 158-173 (AEKLEIPKPGNKEGGE) are compositionally biased toward basic and acidic residues. Disordered regions lie at residues 158–208 (AEKL…TMKS), 230–284 (FNRG…PPVK), and 300–393 (VSEE…KWSK). Residues 178–194 (SQPSANSSNSRNGSYAN) show a composition bias toward polar residues. The span at 254 to 269 (LAPPQPPFRPQPPVRP) shows a compositional bias: pro residues. The segment covering 306–317 (SSVKSKERKPIL) has biased composition (basic and acidic residues). Over residues 384–393 (SGRKGRKWSK) the composition is skewed to basic residues. The tr-type G domain occupies 499–672 (DRPPVITIMG…MLVAELQELK (174 aa)). The G1 stretch occupies residues 508 to 515 (GHVDHGKT). 508-515 (GHVDHGKT) serves as a coordination point for GTP. The tract at residues 533–537 (GITQG) is G2. The segment at 558–561 (DTPG) is G3. GTP contacts are provided by residues 558–562 (DTPGH) and 612–615 (NKID). Positions 612 to 615 (NKID) are G4. Residues 648 to 650 (SAL) form a G5 region.

Belongs to the TRAFAC class translation factor GTPase superfamily. Classic translation factor GTPase family. IF-2 subfamily.

The protein resides in the plastid. Its subcellular location is the chloroplast. Functionally, one of the essential components for the initiation of protein synthesis. Protects formylmethionyl-tRNA from spontaneous hydrolysis and promotes its binding to the 30S ribosomal subunits. Also involved in the hydrolysis of GTP during the formation of the 70S ribosomal complex. The sequence is that of Translation initiation factor IF-2, chloroplastic from Arabidopsis thaliana (Mouse-ear cress).